A 321-amino-acid polypeptide reads, in one-letter code: Lipoyl synthase (321 aa).

Positions 68, 73, 79, 94, 98, 101, and 308 each coordinate [4Fe-4S] cluster. In terms of domain architecture, Radical SAM core spans 80–297; it reads FNHGTATFMI…KVIAEDLGFS (218 aa).

This sequence belongs to the radical SAM superfamily. Lipoyl synthase family. The cofactor is [4Fe-4S] cluster.

It localises to the cytoplasm. It catalyses the reaction [[Fe-S] cluster scaffold protein carrying a second [4Fe-4S](2+) cluster] + N(6)-octanoyl-L-lysyl-[protein] + 2 oxidized [2Fe-2S]-[ferredoxin] + 2 S-adenosyl-L-methionine + 4 H(+) = [[Fe-S] cluster scaffold protein] + N(6)-[(R)-dihydrolipoyl]-L-lysyl-[protein] + 4 Fe(3+) + 2 hydrogen sulfide + 2 5'-deoxyadenosine + 2 L-methionine + 2 reduced [2Fe-2S]-[ferredoxin]. It participates in protein modification; protein lipoylation via endogenous pathway; protein N(6)-(lipoyl)lysine from octanoyl-[acyl-carrier-protein]: step 2/2. Functionally, catalyzes the radical-mediated insertion of two sulfur atoms into the C-6 and C-8 positions of the octanoyl moiety bound to the lipoyl domains of lipoate-dependent enzymes, thereby converting the octanoylated domains into lipoylated derivatives. The sequence is that of Lipoyl synthase from Shewanella amazonensis (strain ATCC BAA-1098 / SB2B).